Here is an 869-residue protein sequence, read N- to C-terminus: Rho GTPase-activating protein 27 (869 aa).

In terms of domain architecture, SH3 spans 6 to 69 (EGDVYVLVEH…PAQYVRELPA (64 aa)). Position 28 is a phosphotyrosine (alanine 28). The disordered stretch occupies residues 104–134 (GADGSSAEPRGRASSLCGPARQRTGGQRNSL). Phosphoserine occurs at positions 155, 215, and 249. Disordered stretches follow at residues 208-300 (RCPP…SGES) and 331-401 (ETEE…GWSC). The segment covering 209-220 (CPPRAESPKQVD) has biased composition (basic and acidic residues). The segment covering 235-250 (RATSPRSAAAPPRLSP) has biased composition (low complexity). The region spanning 246-280 (PRLSPVWETHTDTGTGRPYYYNPDTGVTTWESPFE) is the WW 1 domain. Residues 283 to 294 (EGTTSPATSRAS) show a composition bias toward polar residues. In terms of domain architecture, WW 2 spans 299–333 (ESLETEWGQYWDEESRRVFFYNPLTGETAWEDETE). Positions 345–356 (MQPSLSPRSPGQ) are enriched in polar residues. Serine 350 bears the Phosphoserine mark. Residues 414 to 447 (QFTQEQWVRLEDQHGKPYFYNPEDSSVQWELPQV) form the WW 3 domain. 2 disordered regions span residues 449–477 (IPAPRSVRKSSQDSDTPAQASPPEEKIKT) and 623–642 (EEDVRQNAASPSLSPGGLES). Phosphoserine occurs at positions 459 and 462. Phosphothreonine is present on threonine 464. Serine 469 bears the Phosphoserine mark. A PH domain is found at 477–593 (TLDKAGVLHR…WHKAIAEGIS (117 aa)). A phosphoserine mark is found at serine 632 and serine 636. Positions 677-866 (CALAQLCERE…LILHQCADIF (190 aa)) constitute a Rho-GAP domain.

In terms of assembly, interacts with SH3KBP1/CIN85. Widely expressed. Highly expressed in kidney, lung, small intestine and thymus.

The protein resides in the cytoplasm. It is found in the membrane. Rho GTPase-activating protein which may be involved in clathrin-mediated endocytosis. GTPase activators for the Rho-type GTPases act by converting them to an inactive GDP-bound state. Has activity toward CDC42 and RAC1. The chain is Rho GTPase-activating protein 27 (Arhgap27) from Mus musculus (Mouse).